Here is a 558-residue protein sequence, read N- to C-terminus: PE cleavage protein A (558 aa).

The 93-residue stretch at 1 to 93 folds into the PE domain; that stretch reads MSFLVVVPEF…SGSYAAAEAT (93 aa). Residue Asp297 is part of the active site.

The protein belongs to the mycobacterial PE family. PGRS subfamily. Undergoes auto-proteolytic processing.

Its subcellular location is the secreted. The protein localises to the cell surface. In terms of biological role, aspartic protease that processes the lipase LipY and other PE_PGRS proteins. Can also cleave itself. The protein is PE cleavage protein A of Mycobacterium tuberculosis (strain CDC 1551 / Oshkosh).